A 237-amino-acid chain; its full sequence is DNA repair protein RecO (237 aa).

Belongs to the RecO family.

In terms of biological role, involved in DNA repair and RecF pathway recombination. This Cereibacter sphaeroides (strain ATCC 17025 / ATH 2.4.3) (Rhodobacter sphaeroides) protein is DNA repair protein RecO.